We begin with the raw amino-acid sequence, 294 residues long: Phosphatidylserine decarboxylase proenzyme (294 aa).

Catalysis depends on charge relay system; for autoendoproteolytic cleavage activity residues Asp-100, His-157, and Ser-261. The Schiff-base intermediate with substrate; via pyruvic acid; for decarboxylase activity role is filled by Ser-261. A Pyruvic acid (Ser); by autocatalysis modification is found at Ser-261.

It belongs to the phosphatidylserine decarboxylase family. PSD-B subfamily. Prokaryotic type I sub-subfamily. As to quaternary structure, heterodimer of a large membrane-associated beta subunit and a small pyruvoyl-containing alpha subunit. It depends on pyruvate as a cofactor. In terms of processing, is synthesized initially as an inactive proenzyme. Formation of the active enzyme involves a self-maturation process in which the active site pyruvoyl group is generated from an internal serine residue via an autocatalytic post-translational modification. Two non-identical subunits are generated from the proenzyme in this reaction, and the pyruvate is formed at the N-terminus of the alpha chain, which is derived from the carboxyl end of the proenzyme. The autoendoproteolytic cleavage occurs by a canonical serine protease mechanism, in which the side chain hydroxyl group of the serine supplies its oxygen atom to form the C-terminus of the beta chain, while the remainder of the serine residue undergoes an oxidative deamination to produce ammonia and the pyruvoyl prosthetic group on the alpha chain. During this reaction, the Ser that is part of the protease active site of the proenzyme becomes the pyruvoyl prosthetic group, which constitutes an essential element of the active site of the mature decarboxylase.

The protein localises to the cell membrane. It catalyses the reaction a 1,2-diacyl-sn-glycero-3-phospho-L-serine + H(+) = a 1,2-diacyl-sn-glycero-3-phosphoethanolamine + CO2. It functions in the pathway phospholipid metabolism; phosphatidylethanolamine biosynthesis; phosphatidylethanolamine from CDP-diacylglycerol: step 2/2. In terms of biological role, catalyzes the formation of phosphatidylethanolamine (PtdEtn) from phosphatidylserine (PtdSer). This chain is Phosphatidylserine decarboxylase proenzyme, found in Mannheimia succiniciproducens (strain KCTC 0769BP / MBEL55E).